Reading from the N-terminus, the 310-residue chain is tRNA uridine(34) hydroxylase (310 aa).

A Rhodanese domain is found at 127-225 (KDKDTIVIDT…YLEDISKEES (99 aa)). Catalysis depends on cysteine 185, which acts as the Cysteine persulfide intermediate.

This sequence belongs to the TrhO family.

The enzyme catalyses uridine(34) in tRNA + AH2 + O2 = 5-hydroxyuridine(34) in tRNA + A + H2O. Its function is as follows. Catalyzes oxygen-dependent 5-hydroxyuridine (ho5U) modification at position 34 in tRNAs. The polypeptide is tRNA uridine(34) hydroxylase (Prochlorococcus marinus (strain MIT 9515)).